Reading from the N-terminus, the 507-residue chain is WD repeat-containing protein fzy-1 (507 aa).

Disordered regions lie at residues 1-39 and 74-95; these read MNNK…NTNL and NKEN…SVEG. Composition is skewed to polar residues over residues 15–24 and 74–86; these read VRSSAQQNGL and NKEN…SEPN. WD repeat units follow at residues 219-258, 313-352, 364-406, and 411-450; these read TNEG…TTEY, GHCR…GSTV, EHTG…QKVR, and CETG…KLSH.

Belongs to the WD repeat CDC20/Fizzy family.

Its subcellular location is the chromosome. The protein resides in the cytoplasm. Functionally, plays a role in metaphase-anaphase transition during meiosis I. Required for embryonic anterior-posterior axis formation. This Caenorhabditis elegans protein is WD repeat-containing protein fzy-1.